The sequence spans 593 residues: Aspartate--tRNA(Asp/Asn) ligase (593 aa).

Glu172 serves as a coordination point for L-aspartate. Positions 196–199 (QLFK) are aspartate. L-aspartate is bound at residue Arg218. Residues 218–220 (RDE) and Gln227 contribute to the ATP site. His450 lines the L-aspartate pocket. Glu484 lines the ATP pocket. Arg491 lines the L-aspartate pocket. 536-539 (GLDR) contacts ATP.

The protein belongs to the class-II aminoacyl-tRNA synthetase family. Type 1 subfamily. Homodimer.

The protein localises to the cytoplasm. The enzyme catalyses tRNA(Asx) + L-aspartate + ATP = L-aspartyl-tRNA(Asx) + AMP + diphosphate. Its function is as follows. Aspartyl-tRNA synthetase with relaxed tRNA specificity since it is able to aspartylate not only its cognate tRNA(Asp) but also tRNA(Asn). Reaction proceeds in two steps: L-aspartate is first activated by ATP to form Asp-AMP and then transferred to the acceptor end of tRNA(Asp/Asn). This Nitrosomonas eutropha (strain DSM 101675 / C91 / Nm57) protein is Aspartate--tRNA(Asp/Asn) ligase.